A 195-amino-acid polypeptide reads, in one-letter code: Xanthine phosphoribosyltransferase (195 aa).

2 residues coordinate xanthine: leucine 20 and asparagine 27. 128 to 132 (ANGQA) serves as a coordination point for 5-phospho-alpha-D-ribose 1-diphosphate. Residue lysine 156 participates in xanthine binding.

Belongs to the purine/pyrimidine phosphoribosyltransferase family. Xpt subfamily. As to quaternary structure, homodimer.

The protein localises to the cytoplasm. The catalysed reaction is XMP + diphosphate = xanthine + 5-phospho-alpha-D-ribose 1-diphosphate. The protein operates within purine metabolism; XMP biosynthesis via salvage pathway; XMP from xanthine: step 1/1. Its function is as follows. Converts the preformed base xanthine, a product of nucleic acid breakdown, to xanthosine 5'-monophosphate (XMP), so it can be reused for RNA or DNA synthesis. The protein is Xanthine phosphoribosyltransferase of Limosilactobacillus fermentum (strain NBRC 3956 / LMG 18251) (Lactobacillus fermentum).